Reading from the N-terminus, the 368-residue chain is Phosphate acyltransferase (368 aa).

The disordered stretch occupies residues 335–368 (VSLGDGEHDAGGAGHTGPAAGQHAEPPAAQSSKA).

The protein belongs to the PlsX family. In terms of assembly, homodimer. Probably interacts with PlsY.

The protein resides in the cytoplasm. The catalysed reaction is a fatty acyl-[ACP] + phosphate = an acyl phosphate + holo-[ACP]. The protein operates within lipid metabolism; phospholipid metabolism. Its function is as follows. Catalyzes the reversible formation of acyl-phosphate (acyl-PO(4)) from acyl-[acyl-carrier-protein] (acyl-ACP). This enzyme utilizes acyl-ACP as fatty acyl donor, but not acyl-CoA. This is Phosphate acyltransferase from Burkholderia vietnamiensis (strain G4 / LMG 22486) (Burkholderia cepacia (strain R1808)).